The chain runs to 359 residues: Protein mab-21-like 2 (359 aa).

It belongs to the mab-21 family. As to expression, expressed in the adult cerebellum and eye, with lower levels in the adult forebrain. In embryos at 10.5 days post-coitum strongly expressed in the rostral and distal regions of the developing neural retina, with no expression immediately adjacent to the closing optic fissure. Expression is also observed in the dorsal and ventral aspects of the developing forelimb bud and in the developing pharyngeal arches, as well as in the midbrain.

Its subcellular location is the nucleus. The protein localises to the cytoplasm. Its function is as follows. Required for several aspects of embryonic development including normal development of the eye, notochord, neural tube and other organ tissues, and for embryonic turning. The polypeptide is Protein mab-21-like 2 (Mab21l2) (Mus musculus (Mouse)).